A 289-amino-acid chain; its full sequence is Oxaloacetate decarboxylase (289 aa).

Position 50 (S50) interacts with substrate. D88 contacts Mg(2+). R159 and H235 together coordinate substrate.

Belongs to the isocitrate lyase/PEP mutase superfamily. Oxaloacetate decarboxylase family. As to quaternary structure, homotetramer; dimer of dimers. It depends on Mg(2+) as a cofactor.

The catalysed reaction is oxaloacetate + H(+) = pyruvate + CO2. Functionally, catalyzes the decarboxylation of oxaloacetate into pyruvate. Seems to play a role in maintaining cellular concentrations of bicarbonate and pyruvate. This Pseudomonas entomophila (strain L48) protein is Oxaloacetate decarboxylase.